An 822-amino-acid polypeptide reads, in one-letter code: Valine--tRNA ligase (822 aa).

The short motif at proline 41–histidine 51 is the 'HIGH' region element. The 'KMSKS' region motif lies at lysine 511–serine 515. Lysine 514 lines the ATP pocket. The stretch at glutamate 765–lysine 822 forms a coiled coil.

The protein belongs to the class-I aminoacyl-tRNA synthetase family. ValS type 1 subfamily. As to quaternary structure, monomer.

The protein localises to the cytoplasm. It carries out the reaction tRNA(Val) + L-valine + ATP = L-valyl-tRNA(Val) + AMP + diphosphate. Its function is as follows. Catalyzes the attachment of valine to tRNA(Val). As ValRS can inadvertently accommodate and process structurally similar amino acids such as threonine, to avoid such errors, it has a 'posttransfer' editing activity that hydrolyzes mischarged Thr-tRNA(Val) in a tRNA-dependent manner. The chain is Valine--tRNA ligase from Mesomycoplasma hyopneumoniae (strain J / ATCC 25934 / NCTC 10110) (Mycoplasma hyopneumoniae).